A 416-amino-acid chain; its full sequence is Glutamyl-tRNA reductase (416 aa).

Residues 49 to 52 (TCNR), Ser-105, 110 to 112 (ETQ), and Gln-116 each bind substrate. Cys-50 functions as the Nucleophile in the catalytic mechanism. 185 to 190 (GAGEMI) lines the NADP(+) pocket.

The protein belongs to the glutamyl-tRNA reductase family. In terms of assembly, homodimer.

It carries out the reaction (S)-4-amino-5-oxopentanoate + tRNA(Glu) + NADP(+) = L-glutamyl-tRNA(Glu) + NADPH + H(+). It participates in porphyrin-containing compound metabolism; protoporphyrin-IX biosynthesis; 5-aminolevulinate from L-glutamyl-tRNA(Glu): step 1/2. Catalyzes the NADPH-dependent reduction of glutamyl-tRNA(Glu) to glutamate 1-semialdehyde (GSA). The protein is Glutamyl-tRNA reductase of Thiobacillus denitrificans (strain ATCC 25259 / T1).